A 598-amino-acid chain; its full sequence is ATP-dependent lipid A-core flippase (598 aa).

Residues methionine 1–lysine 15 show a composition bias toward polar residues. The segment at methionine 1–threonine 21 is disordered. Transmembrane regions (helical) follow at residues tryptophan 44–isoleucine 64, leucine 85–asparagine 105, valine 172–valine 192, and isoleucine 269–alanine 289. One can recognise an ABC transmembrane type-1 domain in the interval leucine 48–arginine 329. Positions isoleucine 360–arginine 595 constitute an ABC transporter domain. Residue glycine 393–serine 400 coordinates ATP.

This sequence belongs to the ABC transporter superfamily. Lipid exporter (TC 3.A.1.106) family. Homodimer.

Its subcellular location is the cell inner membrane. It catalyses the reaction ATP + H2O + lipid A-core oligosaccharideSide 1 = ADP + phosphate + lipid A-core oligosaccharideSide 2.. In terms of biological role, involved in lipopolysaccharide (LPS) biosynthesis. Translocates lipid A-core from the inner to the outer leaflet of the inner membrane. Transmembrane domains (TMD) form a pore in the inner membrane and the ATP-binding domain (NBD) is responsible for energy generation. The sequence is that of ATP-dependent lipid A-core flippase from Psychrobacter cryohalolentis (strain ATCC BAA-1226 / DSM 17306 / VKM B-2378 / K5).